Consider the following 500-residue polypeptide: Tektin-like protein 1 (500 aa).

Positions 198–229 (MLTWEKEELKSMKRKMEADMEKSEALLKTLAS) form a coiled coil. Tyr372 is subject to Phosphotyrosine. Residues 420 to 444 (DKLQRHISHVEKNLDELLSMRKKLT) adopt a coiled-coil conformation.

Microtubule inner protein component of sperm flagellar doublet microtubules.

The protein resides in the cytoplasm. Its subcellular location is the cytoskeleton. The protein localises to the flagellum axoneme. Its function is as follows. Microtubule inner protein (MIP) part of the dynein-decorated doublet microtubules (DMTs) in sperm flagellar axoneme, which is required for motile flagellum beating. Forms an extensive interaction network cross-linking the lumen of axonemal doublet microtubules. The polypeptide is Tektin-like protein 1 (Bos taurus (Bovine)).